The primary structure comprises 380 residues: Zinc metalloproteinase-like protein nas-21 (380 aa).

An N-terminal signal peptide occupies residues 1 to 24; that stretch reads MNYFITFFFMHIAVLNFYFRFSNG. Residues 46-234 enclose the Peptidase M12A domain; that stretch reads QALRMDNEPR…LMINEYYQCS (189 aa). An N-linked (GlcNAc...) asparagine glycan is attached at Asn87. Intrachain disulfides connect Cys90/Cys233 and Cys110/Cys130. Residue Glu138 is part of the active site. Asn253, Asn269, Asn283, and Asn304 each carry an N-linked (GlcNAc...) asparagine glycan.

It is found in the secreted. Its function is as follows. May lack metalloprotease activity. This Caenorhabditis elegans protein is Zinc metalloproteinase-like protein nas-21 (nas-21).